A 249-amino-acid chain; its full sequence is Imidazole glycerol phosphate synthase subunit HisF (249 aa).

Catalysis depends on residues Asp11 and Asp130.

This sequence belongs to the HisA/HisF family. In terms of assembly, heterodimer of HisH and HisF.

The protein resides in the cytoplasm. The enzyme catalyses 5-[(5-phospho-1-deoxy-D-ribulos-1-ylimino)methylamino]-1-(5-phospho-beta-D-ribosyl)imidazole-4-carboxamide + L-glutamine = D-erythro-1-(imidazol-4-yl)glycerol 3-phosphate + 5-amino-1-(5-phospho-beta-D-ribosyl)imidazole-4-carboxamide + L-glutamate + H(+). Its pathway is amino-acid biosynthesis; L-histidine biosynthesis; L-histidine from 5-phospho-alpha-D-ribose 1-diphosphate: step 5/9. In terms of biological role, IGPS catalyzes the conversion of PRFAR and glutamine to IGP, AICAR and glutamate. The HisF subunit catalyzes the cyclization activity that produces IGP and AICAR from PRFAR using the ammonia provided by the HisH subunit. The protein is Imidazole glycerol phosphate synthase subunit HisF of Exiguobacterium sibiricum (strain DSM 17290 / CCUG 55495 / CIP 109462 / JCM 13490 / 255-15).